Consider the following 479-residue polypeptide: Sulfate adenylyltransferase subunit 1 (479 aa).

The 215-residue stretch at 25–239 (KSLLRFLTCG…EVLETVDIQR (215 aa)) folds into the tr-type G domain. The interval 34-41 (GSVDDGKS) is G1. 34–41 (GSVDDGKS) contacts GTP. The tract at residues 92 to 96 (GITID) is G2. Residues 113–116 (DTPG) are G3. GTP-binding positions include 113–117 (DTPGH) and 168–171 (NKMD). The tract at residues 168–171 (NKMD) is G4. Residues 206 to 208 (SAL) are G5.

This sequence belongs to the TRAFAC class translation factor GTPase superfamily. Classic translation factor GTPase family. CysN/NodQ subfamily. In terms of assembly, heterodimer composed of CysD, the smaller subunit, and CysN.

It carries out the reaction sulfate + ATP + H(+) = adenosine 5'-phosphosulfate + diphosphate. Its pathway is sulfur metabolism; hydrogen sulfide biosynthesis; sulfite from sulfate: step 1/3. With CysD forms the ATP sulfurylase (ATPS) that catalyzes the adenylation of sulfate producing adenosine 5'-phosphosulfate (APS) and diphosphate, the first enzymatic step in sulfur assimilation pathway. APS synthesis involves the formation of a high-energy phosphoric-sulfuric acid anhydride bond driven by GTP hydrolysis by CysN coupled to ATP hydrolysis by CysD. This is Sulfate adenylyltransferase subunit 1 from Salmonella paratyphi A (strain ATCC 9150 / SARB42).